The following is a 210-amino-acid chain: CLAVATA3/ESR (CLE)-related protein 4D (210 aa).

A signal peptide spans 1–21; the sequence is MAKNAMLCLLILSVVLALAFA. The tract at residues 21–83 is required for secretion from the host cytoplasm to the host apoplasm; that stretch reads ATNKKDDEEP…SNQLPNNNWM (63 aa). N-linked (GlcNAc...) asparagine glycosylation is found at N32 and N59. The tract at residues 115–210 is disordered; it reads RRKTGTHSQR…APAGPDPIHH (96 aa). 4 stretches are compositionally biased toward basic and acidic residues: residues 125–137, 144–158, 165–179, and 186–200; these read HHEE…EKRG, PIHH…EKRG, and PIHH…EKRV. One copy of the A-1 repeat lies at 127-135; the sequence is EETTLEQEK. The 4 X approximate repeat A stretch occupies residues 129-198; that stretch reads TTLEQEKRGA…HQDTKFEQEK (70 aa). The CLE-1 repeat unit spans residues 136-147; sequence RGAPAGPDPIHH. Positions 136 to 210 are 4 X approximate repeat CLE; sequence RGAPAGPDPI…APAGPDPIHH (75 aa). Residues 148 to 156 form an A-2 repeat; it reads QDTTFEQEK. Residues 157–168 form a CLE-2 repeat; that stretch reads RGAPAGPDPIHH. Residues 169–177 form an A-3 repeat; the sequence is QDTTLEQEK. The stretch at 178-189 is one CLE-3 repeat; sequence RVAGAGPDPIHH. One copy of the A-4 repeat lies at 190 to 198; the sequence is QDTKFEQEK. Residues 199-210 form a CLE-4 repeat; the sequence is RGAPAGPDPIHH.

The protein belongs to the CLV3/ESR signal peptide family. Highly expressed exclusively within the dorsal esophageal gland cell during syncytium formation in host plants.

The protein resides in the secreted. It is found in the host cytoplasm. The protein localises to the host extracellular space. Its subcellular location is the extracellular space. It localises to the apoplast. Functionally, mimics host plant CLE extracellular signal peptides that regulate cell fate. May play a role in the differentiation or division of feeding cells (syncytia) induced in plant roots during infection. The chain is CLAVATA3/ESR (CLE)-related protein 4D (CLE-4D) from Globodera rostochiensis (Golden nematode worm).